We begin with the raw amino-acid sequence, 120 residues long: Galanin-like peptide (120 aa).

Positions 1-22 (MALTVPLIVLAVLLSLMESPAS) are cleaved as a signal peptide. A propeptide spanning residues 85-120 (SLGETFAKPDSGVTFVGVPDVVPWKRIRPGTTRFQI) is cleaved from the precursor.

Belongs to the galanin family.

It localises to the secreted. Hypothalamic neuropeptide which binds to the G-protein-coupled galanin receptors (GALR1, GALR2 and GALR3). Involved in a large number of putative physiological functions in CNS homeostatic processes, including the regulation of gonadotropin-releasing hormone secretion. This chain is Galanin-like peptide (GALP), found in Sus scrofa (Pig).